A 397-amino-acid polypeptide reads, in one-letter code: Flavohemoprotein (397 aa).

In terms of domain architecture, Globin spans 4-140 (SFSPHTITLI…IANLLKDREA (137 aa)). Heme b is bound at residue His87. Active-site charge relay system residues include Tyr97 and Glu139. The segment at 151–397 (GGWIHWRRFV…FGPMDEEMAA (247 aa)) is reductase. The 105-residue stretch at 154-258 (IHWRRFVISK…TPPVGDFFLP (105 aa)) folds into the FAD-binding FR-type domain. FAD contacts are provided by residues Tyr192 and 207 to 210 (RNYS). 271–276 (GVGLTP) contributes to the NADP(+) binding site. Residue 387–390 (FFGP) participates in FAD binding.

The protein belongs to the globin family. Two-domain flavohemoproteins subfamily. In the C-terminal section; belongs to the flavoprotein pyridine nucleotide cytochrome reductase family. Requires heme b as cofactor. FAD serves as cofactor.

It carries out the reaction 2 nitric oxide + NADPH + 2 O2 = 2 nitrate + NADP(+) + H(+). The catalysed reaction is 2 nitric oxide + NADH + 2 O2 = 2 nitrate + NAD(+) + H(+). Is involved in NO detoxification in an aerobic process, termed nitric oxide dioxygenase (NOD) reaction that utilizes O(2) and NAD(P)H to convert NO to nitrate, which protects the bacterium from various noxious nitrogen compounds. Therefore, plays a central role in the inducible response to nitrosative stress. The polypeptide is Flavohemoprotein (Xylella fastidiosa (strain Temecula1 / ATCC 700964)).